Reading from the N-terminus, the 372-residue chain is Y-box-binding protein 3 (372 aa).

A disordered region spans residues 1-82 (MSEAGEATTT…LATAAGSEDA (82 aa)). Ser2 is modified (N-acetylserine). Residue Ser2 is modified to Phosphoserine. Residues 7-28 (ATTTTTTTLPQAPTEAAAAAPQ) show a composition bias toward low complexity. Residue Ser34 is modified to Phosphoserine. Over residues 35-79 (PVGSGAPQAAAPAPAAHVAGNPGGDAAPAATGTAAAASLATAAGS) the composition is skewed to low complexity. Residues 93–157 (GTVKWFNVRN…GEKGAEAANV (65 aa)) enclose the CSD domain. A phosphoserine mark is found at Ser134, Ser201, Ser203, and Ser204. The segment at 181–372 (YYGRRRGPPR…APPTQQSSAE (192 aa)) is disordered. Residues 222 to 238 (QLRRPQYRPQYRQRRFP) are compositionally biased toward basic residues. Omega-N-methylarginine is present on Arg251. Over residues 314–324 (QQATSGPNQPS) the composition is skewed to polar residues. Ser324 bears the Phosphoserine mark. At Arg326 the chain carries Omega-N-methylarginine. Residues 327–340 (RGYRRPYNYRRRPR) are compositionally biased toward basic residues. Residues Ser346, Ser369, and Ser370 each carry the phosphoserine modification.

As to quaternary structure, found in a mRNP complex with YBX2. Interacts with RRP1B. In terms of tissue distribution, highly expressed in skeletal muscle and heart.

It is found in the cytoplasm. The protein resides in the nucleus. Functionally, binds to the GM-CSF promoter. Seems to act as a repressor. Also binds to full-length mRNA and to short RNA sequences containing the consensus site 5'-UCCAUCA-3'. May have a role in translation repression. This Homo sapiens (Human) protein is Y-box-binding protein 3 (YBX3).